Consider the following 227-residue polypeptide: MGYQLFEFENLEDCHKALIERFKEFFNAALKKHHQVSVAFSGGRSPISLLQKLSVLDLKWHECLISLVDERIIEASHEDSNAKLLHDYLLQNNALKASFTPLLPEKISGDTNELLDFANQHFKQPHLAILGMGTDGHTASLFPETSAFLNEEKENIVLTKPTNAPYERLSMSINALENCEKLFLSISGVEKRGVLEKALKENAPYSLPIARILHSKKVTTEVFYAKN.

The protein belongs to the glucosamine/galactosamine-6-phosphate isomerase family. 6-phosphogluconolactonase subfamily.

It carries out the reaction 6-phospho-D-glucono-1,5-lactone + H2O = 6-phospho-D-gluconate + H(+). It participates in carbohydrate degradation; pentose phosphate pathway; D-ribulose 5-phosphate from D-glucose 6-phosphate (oxidative stage): step 2/3. In terms of biological role, hydrolysis of 6-phosphogluconolactone to 6-phosphogluconate. In Helicobacter pylori (strain J99 / ATCC 700824) (Campylobacter pylori J99), this protein is 6-phosphogluconolactonase (pgl).